The chain runs to 258 residues: Probable S-methyl-5'-thioinosine phosphorylase (258 aa).

53–54 lines the phosphate pocket; sequence RH. A substrate-binding site is contributed by methionine 180. Residue threonine 181 coordinates phosphate. 204-206 contributes to the substrate binding site; it reads NQA.

Belongs to the PNP/MTAP phosphorylase family. MTAP subfamily. As to quaternary structure, homotrimer.

It catalyses the reaction S-methyl-5'-thioinosine + phosphate = 5-(methylsulfanyl)-alpha-D-ribose 1-phosphate + hypoxanthine. The protein operates within purine metabolism; purine nucleoside salvage. Functionally, catalyzes the reversible phosphorylation of S-methyl-5'-thioinosine (MTI) to hypoxanthine and 5-methylthioribose-1-phosphate. Involved in the breakdown of S-methyl-5'-thioadenosine (MTA), a major by-product of polyamine biosynthesis. Catabolism of (MTA) occurs via deamination to MTI and phosphorolysis to hypoxanthine. The sequence is that of Probable S-methyl-5'-thioinosine phosphorylase from Methanosarcina acetivorans (strain ATCC 35395 / DSM 2834 / JCM 12185 / C2A).